A 118-amino-acid polypeptide reads, in one-letter code: Small ribosomal subunit protein uS13 (118 aa).

The interval 94–118 (SLPLRGQRTKTNARTRKGPRKAIKK) is disordered.

It belongs to the universal ribosomal protein uS13 family. As to quaternary structure, part of the 30S ribosomal subunit. Forms a loose heterodimer with protein S19. Forms two bridges to the 50S subunit in the 70S ribosome.

Located at the top of the head of the 30S subunit, it contacts several helices of the 16S rRNA. In the 70S ribosome it contacts the 23S rRNA (bridge B1a) and protein L5 of the 50S subunit (bridge B1b), connecting the 2 subunits; these bridges are implicated in subunit movement. Contacts the tRNAs in the A and P-sites. The polypeptide is Small ribosomal subunit protein uS13 (Pseudoalteromonas atlantica (strain T6c / ATCC BAA-1087)).